A 197-amino-acid polypeptide reads, in one-letter code: Potassium-transporting ATPase KdpC subunit (197 aa).

A helical membrane pass occupies residues 7-27 (PALVSMGLFTVLLGLAYPLAV).

This sequence belongs to the KdpC family. As to quaternary structure, the system is composed of three essential subunits: KdpA, KdpB and KdpC.

The protein localises to the cell inner membrane. Its function is as follows. Part of the high-affinity ATP-driven potassium transport (or Kdp) system, which catalyzes the hydrolysis of ATP coupled with the electrogenic transport of potassium into the cytoplasm. This subunit acts as a catalytic chaperone that increases the ATP-binding affinity of the ATP-hydrolyzing subunit KdpB by the formation of a transient KdpB/KdpC/ATP ternary complex. This Caulobacter vibrioides (strain ATCC 19089 / CIP 103742 / CB 15) (Caulobacter crescentus) protein is Potassium-transporting ATPase KdpC subunit.